The following is a 142-amino-acid chain: Large ribosomal subunit protein uL13 (142 aa).

It belongs to the universal ribosomal protein uL13 family. Part of the 50S ribosomal subunit.

Its function is as follows. This protein is one of the early assembly proteins of the 50S ribosomal subunit, although it is not seen to bind rRNA by itself. It is important during the early stages of 50S assembly. The protein is Large ribosomal subunit protein uL13 of Shewanella baltica (strain OS185).